Consider the following 250-residue polypeptide: Purine nucleoside phosphorylase BQ2027_MB2173C (250 aa).

Positions 77, 114, and 131 each coordinate Zn(2+).

The protein belongs to the purine nucleoside phosphorylase YfiH/LACC1 family. As to quaternary structure, homodimer. The cofactor is Cu(2+). Zn(2+) is required as a cofactor.

It catalyses the reaction adenosine + phosphate = alpha-D-ribose 1-phosphate + adenine. The enzyme catalyses S-methyl-5'-thioadenosine + phosphate = 5-(methylsulfanyl)-alpha-D-ribose 1-phosphate + adenine. It carries out the reaction inosine + phosphate = alpha-D-ribose 1-phosphate + hypoxanthine. The catalysed reaction is adenosine + H2O + H(+) = inosine + NH4(+). In terms of biological role, purine nucleoside enzyme that catalyzes the phosphorolysis of adenosine and inosine nucleosides, yielding D-ribose 1-phosphate and the respective free bases, adenine and hypoxanthine. Also catalyzes the phosphorolysis of S-methyl-5'-thioadenosine into adenine and S-methyl-5-thio-alpha-D-ribose 1-phosphate. Also has adenosine deaminase activity. This Mycobacterium bovis (strain ATCC BAA-935 / AF2122/97) protein is Purine nucleoside phosphorylase BQ2027_MB2173C.